We begin with the raw amino-acid sequence, 183 residues long: MMSKQLTAQAPVDPIVLGKMGSSYGIRGWLRVFSSTEDAESIFDYQPWFIQKAGQWQQVQLESWKHHNQDMIIKLKGVDDRDAANLLTNCEIVVDSSQLPQLEEGDYYWKDLMGCQVVTTEGYDLGKVVDMMETGSNDVLVIKANLKDAFGIKERLVPFLDGQVIKKVDLTTRSIEVDWDPGF.

Residues 103-183 (EEGDYYWKDL…SIEVDWDPGF (81 aa)) form the PRC barrel domain.

It belongs to the RimM family. Binds ribosomal protein uS19.

Its subcellular location is the cytoplasm. Its function is as follows. An accessory protein needed during the final step in the assembly of 30S ribosomal subunit, possibly for assembly of the head region. Essential for efficient processing of 16S rRNA. May be needed both before and after RbfA during the maturation of 16S rRNA. It has affinity for free ribosomal 30S subunits but not for 70S ribosomes. The sequence is that of Ribosome maturation factor RimM from Escherichia coli O157:H7 (strain EC4115 / EHEC).